The sequence spans 368 residues: Seven-bladed beta-propeller protein MSMEG_5308 (368 aa).

Interacts with MmpL3 and TtfA.

It localises to the cell septum. The protein localises to the cell tip. Its function is as follows. Stabilizes the MmpL3/TtfA trehalose monomycolate (TMM) transport complex under stress conditions. The chain is Seven-bladed beta-propeller protein MSMEG_5308 from Mycolicibacterium smegmatis (strain ATCC 700084 / mc(2)155) (Mycobacterium smegmatis).